Here is a 272-residue protein sequence, read N- to C-terminus: Small ribosomal subunit protein uS2 (272 aa).

The interval 251–272 is disordered; it reads LLTEGAPAAEAPAEAEGETKAE. The segment covering 253 to 264 has biased composition (low complexity); it reads TEGAPAAEAPAE.

Belongs to the universal ribosomal protein uS2 family.

The chain is Small ribosomal subunit protein uS2 from Bifidobacterium adolescentis (strain ATCC 15703 / DSM 20083 / NCTC 11814 / E194a).